The primary structure comprises 1064 residues: Serine protease inhibitor Kazal-type 5 (1064 aa).

Residues 1–22 form the signal peptide; the sequence is MKIATVSVLLPLALCLIQDAAS. The region spanning 28–66 is the Kazal-like 1; atypical domain; that stretch reads EMCHEFQAFMKNGKLFCPQDKKFFQSLDGIMFINKCATC. Intrachain disulfides connect cysteine 30–cysteine 66, cysteine 44–cysteine 63, cysteine 97–cysteine 133, cysteine 111–cysteine 130, cysteine 119–cysteine 151, cysteine 161–cysteine 197, cysteine 175–cysteine 194, cysteine 225–cysteine 261, cysteine 239–cysteine 258, cysteine 297–cysteine 333, cysteine 311–cysteine 330, cysteine 367–cysteine 403, cysteine 381–cysteine 400, cysteine 437–cysteine 473, cysteine 451–cysteine 470, cysteine 496–cysteine 532, cysteine 510–cysteine 529, cysteine 567–cysteine 603, cysteine 581–cysteine 600, cysteine 632–cysteine 668, and cysteine 646–cysteine 665. Kazal-like domains lie at 91–153, 155–216, 219–285, 291–352, 361–423, 431–489, 490–551, 561–622, 626–688, 701–757, 768–830, 843–905, 910–971, and 987–1048; these read APTE…ECKS, NPEQ…ETRI, NAEK…KAEE, REIV…ARAR, TSYA…KSRN, ASFE…KAKR, EAAK…EEKG, EAVQ…PRAK, EAEK…EDQR, GNTQ…KNEY, ESGK…EDRS, NDKE…EKSS, NNAK…EKPS, and SLDS…KCEE. Residues 676-688 are compositionally biased toward basic and acidic residues; the sequence is NEERKRKEEEDQR. The segment at 676–705 is disordered; the sequence is NEERKRKEEEDQRNAAGHGSSGGGGGNTQD. 6 disulfide bridges follow: cysteine 707–cysteine 743, cysteine 721–cysteine 740, cysteine 774–cysteine 810, cysteine 788–cysteine 807, cysteine 849–cysteine 885, and cysteine 863–cysteine 882. Residues 751 to 775 are disordered; the sequence is AERKNEYSRSRSNGTGSESGKDTCD. The segment at 818-849 is disordered; that stretch reads AAEKKKKEDEDRSNTGERSNTGERSNDKEDLC. A compositionally biased stretch (basic and acidic residues) spans 895 to 905; sequence ERKKKDEEKSS. The interval 895 to 915 is disordered; that stretch reads ERKKKDEEKSSSKPSNNAKDE. 2 disulfide bridges follow: cysteine 916-cysteine 952 and cysteine 930-cysteine 949. Basic and acidic residues predominate over residues 967 to 977; it reads QEKPSHVRASQ. Positions 967–987 are disordered; that stretch reads QEKPSHVRASQEEDSPDSFSS. 3 cysteine pairs are disulfide-bonded: cysteine 993–cysteine 1028, cysteine 1006–cysteine 1025, and cysteine 1014–cysteine 1046. A disordered region spans residues 1041-1064; it reads RSTGKCEESSTPGTTAASMPPSDE.

Post-translationally, proteolytically processed by furin in individual domains (D1, D5, D6, D8 through D11, and D9 through D15) exhibiting various inhibitory potentials for multiple proteases. In terms of tissue distribution, highly expressed in the thymus and stratum corneum. Also found in the oral mucosa, parathyroid gland, Bartholin's glands, tonsils, and vaginal epithelium. Very low levels are detected in lung, kidney, and prostate.

The protein localises to the secreted. Serine protease inhibitor, probably important for the anti-inflammatory and/or antimicrobial protection of mucous epithelia. Contribute to the integrity and protective barrier function of the skin by regulating the activity of defense-activating and desquamation-involved proteases. Inhibits KLK5, it's major target, in a pH-dependent manner. Inhibits KLK7, KLK14 CASP14, and trypsin. In Homo sapiens (Human), this protein is Serine protease inhibitor Kazal-type 5 (SPINK5).